A 61-amino-acid polypeptide reads, in one-letter code: Small ribosomal subunit protein uS14B (61 aa).

Residues Cys-24, Cys-27, Cys-40, and Cys-43 each coordinate Zn(2+).

Belongs to the universal ribosomal protein uS14 family. Zinc-binding uS14 subfamily. As to quaternary structure, part of the 30S ribosomal subunit. Contacts proteins S3 and S10. The cofactor is Zn(2+).

Functionally, binds 16S rRNA, required for the assembly of 30S particles and may also be responsible for determining the conformation of the 16S rRNA at the A site. This is Small ribosomal subunit protein uS14B from Shouchella clausii (strain KSM-K16) (Alkalihalobacillus clausii).